The sequence spans 307 residues: Small ribosomal subunit biogenesis GTPase RsgA (307 aa).

A disordered region spans residues 1–21 (MPSEHPFSDGISTPNPKETMN). The span at 10 to 21 (GISTPNPKETMN) shows a compositional bias: polar residues. Positions 85–242 (RQDAWKTKLI…LIDSPGLQEF (158 aa)) constitute a CP-type G domain. GTP is bound by residues 135-138 (NKAD) and 184-192 (GQSGMGKST). Zn(2+)-binding residues include Cys-266, Cys-271, His-273, and Cys-279.

Belongs to the TRAFAC class YlqF/YawG GTPase family. RsgA subfamily. In terms of assembly, monomer. Associates with 30S ribosomal subunit, binds 16S rRNA. Zn(2+) serves as cofactor.

It is found in the cytoplasm. Its function is as follows. One of several proteins that assist in the late maturation steps of the functional core of the 30S ribosomal subunit. Helps release RbfA from mature subunits. May play a role in the assembly of ribosomal proteins into the subunit. Circularly permuted GTPase that catalyzes slow GTP hydrolysis, GTPase activity is stimulated by the 30S ribosomal subunit. The protein is Small ribosomal subunit biogenesis GTPase RsgA of Neisseria gonorrhoeae (strain ATCC 700825 / FA 1090).